A 204-amino-acid chain; its full sequence is Peptide deformylase (204 aa).

Fe cation contacts are provided by cysteine 131 and histidine 174. Glutamate 175 is a catalytic residue. Residue histidine 178 coordinates Fe cation.

The protein belongs to the polypeptide deformylase family. Fe(2+) serves as cofactor.

The enzyme catalyses N-terminal N-formyl-L-methionyl-[peptide] + H2O = N-terminal L-methionyl-[peptide] + formate. Removes the formyl group from the N-terminal Met of newly synthesized proteins. Requires at least a dipeptide for an efficient rate of reaction. N-terminal L-methionine is a prerequisite for activity but the enzyme has broad specificity at other positions. The polypeptide is Peptide deformylase (Streptococcus agalactiae serotype III (strain NEM316)).